Reading from the N-terminus, the 676-residue chain is UvrABC system protein B (676 aa).

Positions 26 to 414 (EGLENGLAHQ…SDGEIAEQVV (389 aa)) constitute a Helicase ATP-binding domain. ATP is bound at residue 39–46 (GVTGSGKT). Positions 92–115 (YFDYYQPEAYVPTTDTFIEKDSSV) match the Beta-hairpin motif. Residues 432-598 (QVDDLLSEIR…ALKKDVADIL (167 aa)) enclose the Helicase C-terminal domain. The UVR domain maps to 636-671 (EKAIQKLESKMYQHAKDLEFEQAAQVRDEIDNLRKQ).

This sequence belongs to the UvrB family. Forms a heterotetramer with UvrA during the search for lesions. Interacts with UvrC in an incision complex.

The protein localises to the cytoplasm. Its function is as follows. The UvrABC repair system catalyzes the recognition and processing of DNA lesions. A damage recognition complex composed of 2 UvrA and 2 UvrB subunits scans DNA for abnormalities. Upon binding of the UvrA(2)B(2) complex to a putative damaged site, the DNA wraps around one UvrB monomer. DNA wrap is dependent on ATP binding by UvrB and probably causes local melting of the DNA helix, facilitating insertion of UvrB beta-hairpin between the DNA strands. Then UvrB probes one DNA strand for the presence of a lesion. If a lesion is found the UvrA subunits dissociate and the UvrB-DNA preincision complex is formed. This complex is subsequently bound by UvrC and the second UvrB is released. If no lesion is found, the DNA wraps around the other UvrB subunit that will check the other stand for damage. This is UvrABC system protein B from Aliivibrio fischeri (strain ATCC 700601 / ES114) (Vibrio fischeri).